We begin with the raw amino-acid sequence, 296 residues long: MIRALFAAAKKIVIKIGSNTLAQADGTPDEEFLAECARACAALMRDGKQIVVVSSGAQVAGISALHCLSSPPQGAGLERHESRGVIPGDGASCKQALCAVGQAELISRWRSAFAAHQQCVGQFLCTKEDFTDSDRAAQVRYTLSFLLERRVVPILNENDALCCSDVPSVPADRRVSLSPQKRIGDNDSLSAFVALLWQADLLLLLSDIDGVYDKDPKAHTDAQHVPLVTDVSALVGKTSMGSSNVFGTGGIATKLDAARLVTRAGIPLVLANGRHLDPILSLMRGDARGTLFVPVS.

An ATP-binding site is contributed by Lys15. The substrate site is built by Ser55, Asp159, and Asn186. Residues 206–207 (SD) and 248–254 (TGGIATK) each bind ATP.

Belongs to the glutamate 5-kinase family.

It localises to the cytoplasm. The catalysed reaction is L-glutamate + ATP = L-glutamyl 5-phosphate + ADP. It functions in the pathway amino-acid biosynthesis; L-proline biosynthesis; L-glutamate 5-semialdehyde from L-glutamate: step 1/2. In terms of biological role, catalyzes the transfer of a phosphate group to glutamate to form L-glutamate 5-phosphate. The sequence is that of Glutamate 5-kinase from Treponema pallidum (strain Nichols).